Here is a 69-residue protein sequence, read N- to C-terminus: DNA-directed RNA polymerase subunit omega (69 aa).

It belongs to the RNA polymerase subunit omega family. The RNAP catalytic core consists of 2 alpha, 1 beta, 1 beta' and 1 omega subunit. When a sigma factor is associated with the core the holoenzyme is formed, which can initiate transcription.

It carries out the reaction RNA(n) + a ribonucleoside 5'-triphosphate = RNA(n+1) + diphosphate. In terms of biological role, promotes RNA polymerase assembly. Latches the N- and C-terminal regions of the beta' subunit thereby facilitating its interaction with the beta and alpha subunits. This Pelotomaculum thermopropionicum (strain DSM 13744 / JCM 10971 / SI) protein is DNA-directed RNA polymerase subunit omega.